Consider the following 291-residue polypeptide: S-methyl-5'-thioadenosine phosphorylase (291 aa).

Phosphate is bound by residues Ser12, 54-55 (RH), and 87-88 (SA). Met185 lines the substrate pocket. Thr186 is a binding site for phosphate. 209–211 (DFD) lines the substrate pocket.

Belongs to the PNP/MTAP phosphorylase family. MTAP subfamily. Homohexamer. Dimer of a homotrimer.

The catalysed reaction is S-methyl-5'-thioadenosine + phosphate = 5-(methylsulfanyl)-alpha-D-ribose 1-phosphate + adenine. It participates in amino-acid biosynthesis; L-methionine biosynthesis via salvage pathway; S-methyl-5-thio-alpha-D-ribose 1-phosphate from S-methyl-5'-thioadenosine (phosphorylase route): step 1/1. Its function is as follows. Catalyzes the reversible phosphorylation of S-methyl-5'-thioadenosine (MTA) to adenine and 5-methylthioribose-1-phosphate. Involved in the breakdown of MTA, a major by-product of polyamine biosynthesis. Responsible for the first step in the methionine salvage pathway after MTA has been generated from S-adenosylmethionine. Has broad substrate specificity with 6-aminopurine nucleosides as preferred substrates. The chain is S-methyl-5'-thioadenosine phosphorylase from Bradyrhizobium diazoefficiens (strain JCM 10833 / BCRC 13528 / IAM 13628 / NBRC 14792 / USDA 110).